Here is a 379-residue protein sequence, read N- to C-terminus: Probable RNA methyltransferase RB6963 (379 aa).

Glu89 acts as the Proton acceptor in catalysis. The 237-residue stretch at 96 to 332 (ATGRTTLCVS…VRYSLGNDIE (237 aa)) folds into the Radical SAM core domain. Cysteines 103 and 335 form a disulfide. Cys110, Cys114, and Cys117 together coordinate [4Fe-4S] cluster. Residues 160-161 (GE), Ser192, 215-217 (SLH), and Asn291 contribute to the S-adenosyl-L-methionine site. Cys335 acts as the S-methylcysteine intermediate in catalysis.

The protein belongs to the radical SAM superfamily. RlmN family. Requires [4Fe-4S] cluster as cofactor.

The protein localises to the cytoplasm. This is Probable RNA methyltransferase RB6963 from Rhodopirellula baltica (strain DSM 10527 / NCIMB 13988 / SH1).